A 344-amino-acid chain; its full sequence is Dihydroorotase (344 aa).

The Zn(2+) site is built by His14 and His16. Residues 16–18 (HLR) and Asn42 contribute to the substrate site. Zn(2+)-binding residues include Lys100, His137, and His175. Lys100 carries the N6-carboxylysine modification. His137 contacts substrate. A substrate-binding site is contributed by Leu220. A Zn(2+)-binding site is contributed by Asp248. The active site involves Asp248. Residues His252 and Ala264 each coordinate substrate.

Belongs to the metallo-dependent hydrolases superfamily. DHOase family. Class II DHOase subfamily. As to quaternary structure, homodimer. It depends on Zn(2+) as a cofactor.

It carries out the reaction (S)-dihydroorotate + H2O = N-carbamoyl-L-aspartate + H(+). It functions in the pathway pyrimidine metabolism; UMP biosynthesis via de novo pathway; (S)-dihydroorotate from bicarbonate: step 3/3. Its function is as follows. Catalyzes the reversible cyclization of carbamoyl aspartate to dihydroorotate. The polypeptide is Dihydroorotase (Cupriavidus pinatubonensis (strain JMP 134 / LMG 1197) (Cupriavidus necator (strain JMP 134))).